The chain runs to 206 residues: Ribosome maturation factor RimM (206 aa).

A PRC barrel domain is found at 113 to 206; it reads DDEYYWVDLI…RIDSNWPTEL (94 aa).

Belongs to the RimM family. Binds ribosomal protein uS19.

It is found in the cytoplasm. Functionally, an accessory protein needed during the final step in the assembly of 30S ribosomal subunit, possibly for assembly of the head region. Essential for efficient processing of 16S rRNA. May be needed both before and after RbfA during the maturation of 16S rRNA. It has affinity for free ribosomal 30S subunits but not for 70S ribosomes. In Bordetella petrii (strain ATCC BAA-461 / DSM 12804 / CCUG 43448), this protein is Ribosome maturation factor RimM.